Reading from the N-terminus, the 612-residue chain is Coagulation factor X-activating enzyme heavy chain (612 aa).

The N-terminal stretch at 1–20 (MMQVLLVTISLAVFPYQGSS) is a signal peptide. Positions 21-193 (IILESGNVND…KKASQLVATS (173 aa)) are cleaved as a propeptide — or 194. The 195-residue stretch at 201–395 (TFIELVIVVD…YKPKCILNPP (195 aa)) folds into the Peptidase M12B domain. Glu204 contributes to the Ca(2+) binding site. An N-linked (GlcNAc...) asparagine glycan is attached at Asn259. A Ca(2+)-binding site is contributed by Asp286. Intrachain disulfides connect Cys310/Cys390, Cys350/Cys374, and Cys352/Cys357. His335 is a binding site for Zn(2+). Residue Glu336 is part of the active site. Zn(2+) is bound by residues His339 and His345. Residues Asn353 and Asn373 are each glycosylated (N-linked (GlcNAc...) asparagine). Ca(2+)-binding residues include Cys390, Asn393, Ile405, Asn408, Glu412, Glu415, and Asp418. The region spanning 403 to 489 (PPICGNEIWE…ECPADGFHAN (87 aa)) is the Disintegrin domain. An intrachain disulfide couples Cys461 to Cys481. The D/ECD-tripeptide signature appears at 467 to 469 (ECD).

This sequence belongs to the venom metalloproteinase (M12B) family. P-III subfamily. P-IIId sub-subfamily. As to quaternary structure, heterotrimer; disulfide-linked. The heterotrimer consists of 1 heavy chain and 2 light chains (lectins): LC1 and LC2 (AC Q7T045 and AC Q696W1). It depends on Zn(2+) as a cofactor. Post-translationally, N-glycosylated. Contains 8.0% of hexoses, 2.5% of hexosamines and 2.5% of sialic acids. Expressed by the venom gland.

Its subcellular location is the secreted. The enzyme catalyses Specifically activates several components of the blood clotting system, including coagulation factor X, coagulation factor IX and protein C by cleavage of Arg-|-Xaa bonds. Has no action on insulin B chain.. Calcium is required for the activity of the heterotrimer. In terms of biological role, catalytic subunit of blood coagulation factor X-activating enzyme. Activates coagulation factor X (F10) by cleaving the Arg(234)-Ile(235) bond, activates coagulation factor IX (F9) by cleaving the Arg(226)-Val(227) bond and is also able to activate protein C (PROC). The polypeptide is Coagulation factor X-activating enzyme heavy chain (Macrovipera lebetinus (Levantine viper)).